Consider the following 540-residue polypeptide: 2-isopropylmalate synthase (540 aa).

The 262-residue stretch at 8-269 folds into the Pyruvate carboxyltransferase domain; sequence VLIFDTTLRD…YFNPFFGREP (262 aa). Positions 17, 208, 210, and 244 each coordinate Mn(2+). The regulatory domain stretch occupies residues 408 to 540; that stretch reads QLRLVQVSCG…AVLADLRSGI (133 aa).

Belongs to the alpha-IPM synthase/homocitrate synthase family. LeuA type 1 subfamily. As to quaternary structure, homodimer. Requires Mn(2+) as cofactor.

The protein localises to the cytoplasm. It catalyses the reaction 3-methyl-2-oxobutanoate + acetyl-CoA + H2O = (2S)-2-isopropylmalate + CoA + H(+). It functions in the pathway amino-acid biosynthesis; L-leucine biosynthesis; L-leucine from 3-methyl-2-oxobutanoate: step 1/4. In terms of biological role, catalyzes the condensation of the acetyl group of acetyl-CoA with 3-methyl-2-oxobutanoate (2-ketoisovalerate) to form 3-carboxy-3-hydroxy-4-methylpentanoate (2-isopropylmalate). The chain is 2-isopropylmalate synthase from Prochlorococcus marinus (strain MIT 9313).